The following is a 288-amino-acid chain: Mycothiol S-conjugate amidase (288 aa).

3 residues coordinate Zn(2+): histidine 12, aspartate 15, and histidine 142.

The protein belongs to the MshB deacetylase family. Mca subfamily. As to quaternary structure, monomer. Zn(2+) is required as a cofactor.

It catalyses the reaction mycothiol S-conjugate + H2O = an N-acetyl-L-cysteine-S-conjugate + 1D-myo-inositol 2-amino-2-deoxy-alpha-D-glucopyranoside. Its activity is regulated as follows. Partially inhibited by MSH when MSmB is used as substrate. Competitively inhibited by the GlcNAc-cyclohexyl derivative 5-(4-chlorophenyl)-N-((2R,3R,4R,5S,6R)-2-(cyclohexylthio)-tetrahydro-4,5-dihydroxy-6-(hydroxymethyl)-2H-pyran-3-yl)furan-2-carboxamide, which also inhibits MshB. Functionally, a mycothiol (MSH, N-acetyl-cysteinyl-glucosaminyl-inositol) S-conjugate amidase, it recycles conjugated MSH to the N-acetyl cysteine conjugate and the MSH precursor. Involved in MSH-dependent detoxification of a number of alkylating agents and antibiotics. Activity is specific for the mycothiol moiety. Has a low but measurable deacetylation activity on GlcNAc-Ins (N-acetyl-glucosaminyl-inositol), and thus can also directly contribute to the production of MSH. The protein is Mycothiol S-conjugate amidase of Mycobacterium tuberculosis (strain ATCC 25618 / H37Rv).